Here is a 299-residue protein sequence, read N- to C-terminus: Protoheme IX farnesyltransferase (299 aa).

Transmembrane regions (helical) follow at residues 17–37 (VVAL…PAPY), 41–61 (GLLV…AAVF), 91–111 (ALMW…LFVN), 113–133 (ITMV…TLYL), 141–161 (IVIG…AVSG), 168–188 (ACLL…ALAI), 207–227 (GLAY…LVSL), 228–248 (LPYL…ALGI), and 266–286 (IAWC…VTLL).

This sequence belongs to the UbiA prenyltransferase family. Protoheme IX farnesyltransferase subfamily.

The protein localises to the cell inner membrane. The enzyme catalyses heme b + (2E,6E)-farnesyl diphosphate + H2O = Fe(II)-heme o + diphosphate. The protein operates within porphyrin-containing compound metabolism; heme O biosynthesis; heme O from protoheme: step 1/1. In terms of biological role, converts heme B (protoheme IX) to heme O by substitution of the vinyl group on carbon 2 of heme B porphyrin ring with a hydroxyethyl farnesyl side group. This Ruthia magnifica subsp. Calyptogena magnifica protein is Protoheme IX farnesyltransferase.